Here is a 460-residue protein sequence, read N- to C-terminus: MNTSVPPAVSPNITVLAPGKGPWQVAFIGITTGLLSLATVTGNLLVLISFKVNTELKTVNNYFLLSLACADLIIGTFSMNLYTTYLLMGHWALGTLACDLWLALDYVASNASVMNLLLISFDRYFSVTRPLSYRAKRTPRRAALMIGLAWLVSFVLWAPAILFWQYLVGERTVLAGQCYIQFLSQPIITFGTAMAAFYLPVTVMCTLYWRIYRETENRARELAALQGSETPGKGGGSSSSSERSQPGAEGSPESPPGRCCRCCRAPRLLQAYSWKEEEEEDEGSMESLTSSEGEEPGSEVVIKMPMVDPEAQAPTKQPPKSSPNTVKRPTKKGRDRGGKGQKPRGKEQLAKRKTFSLVKEKKAARTLSAILLAFILTWTPYNIMVLVSTFCKDCVPETLWELGYWLCYVNSTVNPMCYALCNKAFRDTFRLLLLCRWDKRRWRKIPKRPGSVHRTPSRQC.

Over 1-22 the chain is Extracellular; sequence MNTSVPPAVSPNITVLAPGKGP. N2 and N12 each carry an N-linked (GlcNAc...) asparagine glycan. Residues 23-48 form a helical membrane-spanning segment; sequence WQVAFIGITTGLLSLATVTGNLLVLI. The Cytoplasmic segment spans residues 49 to 62; it reads SFKVNTELKTVNNY. A helical transmembrane segment spans residues 63-84; that stretch reads FLLSLACADLIIGTFSMNLYTT. At 85–95 the chain is on the extracellular side; that stretch reads YLLMGHWALGT. The helical transmembrane segment at 96 to 121 threads the bilayer; that stretch reads LACDLWLALDYVASNASVMNLLLISF. C98 and C178 are oxidised to a cystine. Residues 122–142 lie on the Cytoplasmic side of the membrane; that stretch reads DRYFSVTRPLSYRAKRTPRRA. Residues 143 to 164 form a helical membrane-spanning segment; sequence ALMIGLAWLVSFVLWAPAILFW. Residues 165-185 lie on the Extracellular side of the membrane; it reads QYLVGERTVLAGQCYIQFLSQ. The chain crosses the membrane as a helical span at residues 186-209; that stretch reads PIITFGTAMAAFYLPVTVMCTLYW. Topologically, residues 210 to 366 are cytoplasmic; sequence RIYRETENRA…LVKEKKAART (157 aa). Disordered regions lie at residues 225-257, 274-297, and 310-351; these read LQGSETPGKGGGSSSSSERSQPGAEGSPESPPG, WKEEEEEDEGSMESLTSSEGEEPG, and EAQA…QLAK. T230 bears the Phosphothreonine mark. Residues 238 to 257 show a composition bias toward low complexity; it reads SSSSERSQPGAEGSPESPPG. Phosphoserine is present on S254. The segment covering 328 to 343 has biased composition (basic residues); the sequence is RPTKKGRDRGGKGQKP. The helical transmembrane segment at 367–390 threads the bilayer; sequence LSAILLAFILTWTPYNIMVLVSTF. The Extracellular portion of the chain corresponds to 391-397; the sequence is CKDCVPE. The chain crosses the membrane as a helical span at residues 398–420; that stretch reads TLWELGYWLCYVNSTVNPMCYAL. At 421–460 the chain is on the cytoplasmic side; it reads CNKAFRDTFRLLLLCRWDKRRWRKIPKRPGSVHRTPSRQC. S451 bears the Phosphoserine mark. Phosphothreonine is present on T455. S457 is subject to Phosphoserine.

The protein belongs to the G-protein coupled receptor 1 family. Muscarinic acetylcholine receptor subfamily. CHRM1 sub-subfamily. Interacts with GPRASP2. Interacts with TMEM147.

It localises to the cell membrane. It is found in the postsynaptic cell membrane. In terms of biological role, the muscarinic acetylcholine receptor mediates various cellular responses, including inhibition of adenylate cyclase, breakdown of phosphoinositides and modulation of potassium channels through the action of G proteins. Primary transducing effect is Pi turnover. This is Muscarinic acetylcholine receptor M1 (Chrm1) from Mus musculus (Mouse).